Here is a 469-residue protein sequence, read N- to C-terminus: UTP--glucose-1-phosphate uridylyltransferase 2 (469 aa).

Residue Ala-2 is modified to N-acetylalanine. Residues 85–88, Lys-99, Gln-162, and Gly-191 contribute to the UTP site; that span reads LNGG. 87-88 contributes to the substrate binding site; that stretch reads GG. Substrate contacts are provided by residues His-192 and 220 to 222; that span reads NSD. UTP-binding residues include Asp-222 and Lys-360.

This sequence belongs to the UDPGP type 1 family. In terms of tissue distribution, expressed in cauline leaves, flowers and siliques.

It localises to the cytoplasm. It catalyses the reaction alpha-D-glucose 1-phosphate + UTP + H(+) = UDP-alpha-D-glucose + diphosphate. Its function is as follows. Converts glucose 1-phosphate to UDP-glucose, which is the major glycosyl donor for polysaccharides. Acts redundantly with UGP1 and is essential for the synthesis of sucrose, starch and cell wall, and callose deposition. The sequence is that of UTP--glucose-1-phosphate uridylyltransferase 2 from Arabidopsis thaliana (Mouse-ear cress).